The primary structure comprises 230 residues: uncharacterized protein (230 aa).

Helical transmembrane passes span 34-54, 56-76, 87-107, 111-131, 146-166, 167-187, and 205-225; these read FFAGSLLLATVGALLGLMNFQ, VVQYKWVFFIAEIVAFFGLMF, MLFAFTSLSGVTLVPLLGMVI, GLGAVWQALGMTTIVFGLMSV, MLFIALIVVVVCSLINLFLGS, PMFQVVIAGASAILFSLYIAY, and VSLYLDFLNVFISILQIIGIF.

The protein belongs to the BI1 family.

The protein resides in the cell membrane. This is an uncharacterized protein from Helicobacter pylori (strain J99 / ATCC 700824) (Campylobacter pylori J99).